We begin with the raw amino-acid sequence, 279 residues long: DegV domain-containing protein lin1977 (279 aa).

Positions 4–278 (IKIITDSTAG…TGAFAFMYYT (275 aa)) constitute a DegV domain. Hexadecanoate-binding residues include Ser-62 and Ser-94.

Functionally, may bind long-chain fatty acids, such as palmitate, and may play a role in lipid transport or fatty acid metabolism. The protein is DegV domain-containing protein lin1977 of Listeria innocua serovar 6a (strain ATCC BAA-680 / CLIP 11262).